The chain runs to 132 residues: MPAQISSEDQQLSTKIAERLKRDEAGLVAAVVQQFDSKEVLMLGWMDDEALRRTLRSGRVTFFSRSRQEYWRKGDTSGHIQMVKAVALDCDGDALLISVDQHGPACHTGTRSCFDGRALPAFVEPVFVEPVA.

Asp-89 lines the Mg(2+) pocket. Cys-90 contributes to the Zn(2+) binding site. Residues Asp-91 and Asp-93 each coordinate Mg(2+). Cys-106 and Cys-113 together coordinate Zn(2+).

It belongs to the PRA-CH family. Homodimer. It depends on Mg(2+) as a cofactor. The cofactor is Zn(2+).

The protein localises to the cytoplasm. The catalysed reaction is 1-(5-phospho-beta-D-ribosyl)-5'-AMP + H2O = 1-(5-phospho-beta-D-ribosyl)-5-[(5-phospho-beta-D-ribosylamino)methylideneamino]imidazole-4-carboxamide. It participates in amino-acid biosynthesis; L-histidine biosynthesis; L-histidine from 5-phospho-alpha-D-ribose 1-diphosphate: step 3/9. Its function is as follows. Catalyzes the hydrolysis of the adenine ring of phosphoribosyl-AMP. The polypeptide is Phosphoribosyl-AMP cyclohydrolase (Renibacterium salmoninarum (strain ATCC 33209 / DSM 20767 / JCM 11484 / NBRC 15589 / NCIMB 2235)).